The sequence spans 113 residues: Large ribosomal subunit protein bL19 (113 aa).

The protein belongs to the bacterial ribosomal protein bL19 family.

Its function is as follows. This protein is located at the 30S-50S ribosomal subunit interface and may play a role in the structure and function of the aminoacyl-tRNA binding site. In Mycobacteroides abscessus (strain ATCC 19977 / DSM 44196 / CCUG 20993 / CIP 104536 / JCM 13569 / NCTC 13031 / TMC 1543 / L948) (Mycobacterium abscessus), this protein is Large ribosomal subunit protein bL19.